The following is a 249-amino-acid chain: Isoprenyl transferase (249 aa).

The active site involves Asp25. Asp25 is a Mg(2+) binding site. Substrate is bound by residues 26–29 (GNGR), Trp30, Arg38, His42, and 70–72 (STE). The active-site Proton acceptor is Asn73. Substrate is bound by residues Trp74, Arg76, Arg197, and 203–205 (RLS). Position 216 (Glu216) interacts with Mg(2+).

The protein belongs to the UPP synthase family. Homodimer. Requires Mg(2+) as cofactor.

Its function is as follows. Catalyzes the condensation of isopentenyl diphosphate (IPP) with allylic pyrophosphates generating different type of terpenoids. This Streptococcus pyogenes serotype M6 (strain ATCC BAA-946 / MGAS10394) protein is Isoprenyl transferase.